Reading from the N-terminus, the 146-residue chain is Anti-sigma F factor (146 aa).

Belongs to the anti-sigma-factor family.

The enzyme catalyses L-seryl-[protein] + ATP = O-phospho-L-seryl-[protein] + ADP + H(+). It carries out the reaction L-threonyl-[protein] + ATP = O-phospho-L-threonyl-[protein] + ADP + H(+). Binds to sigma F and blocks its ability to form an RNA polymerase holoenzyme (E-sigma F). Phosphorylates SpoIIAA on a serine residue. This phosphorylation may enable SpoIIAA to act as an anti-anti-sigma factor that counteracts SpoIIAB and thus releases sigma F from inhibition. The protein is Anti-sigma F factor of Geobacillus sp. (strain WCH70).